The following is a 683-amino-acid chain: Methionine--tRNA ligase (683 aa).

The 'HIGH' region signature appears at 15 to 25 (YYPSGKLHIGN). Positions 311–315 (KMSKS) match the 'KMSKS' region motif. Residue lysine 314 participates in ATP binding. One can recognise a tRNA-binding domain in the interval 581–683 (DFDKVELKVA…DNMVNGSLIS (103 aa)).

This sequence belongs to the class-I aminoacyl-tRNA synthetase family. MetG type 2B subfamily. Homodimer.

It localises to the cytoplasm. The catalysed reaction is tRNA(Met) + L-methionine + ATP = L-methionyl-tRNA(Met) + AMP + diphosphate. Is required not only for elongation of protein synthesis but also for the initiation of all mRNA translation through initiator tRNA(fMet) aminoacylation. The sequence is that of Methionine--tRNA ligase from Lactiplantibacillus plantarum (strain ATCC BAA-793 / NCIMB 8826 / WCFS1) (Lactobacillus plantarum).